The chain runs to 1205 residues: cGMP-specific 3',5'-cyclic phosphodiesterase (1205 aa).

Positions 1-153 are disordered; it reads MTDVSSPAGG…TKASTTASQQ (153 aa). Residues 18–32 show a composition bias toward low complexity; sequence TTSSSPAATTSASSS. Positions 33-48 are enriched in polar residues; it reads KPLTNGANKTTISTTA. A compositionally biased stretch (low complexity) spans 62–71; it reads GAIPASSSSG. Polar residues predominate over residues 83–94; that stretch reads SNNNRPAATNRS. Over residues 118 to 140 the composition is skewed to low complexity; sequence SSSSPSQSPSQTQASIQTQTSQQ. GAF domains lie at 259–411 and 443–624; these read DIDV…GIGI and NLEC…GLGI. The PDEase domain maps to 654–1052; that stretch reads SQDQTEKLTQ…RNWQDLAEKV (399 aa). Histidine 730 serves as the catalytic Proton donor. Histidine 734, histidine 770, aspartate 771, and aspartate 956 together coordinate a divalent metal cation. Disordered stretches follow at residues 1093–1122 and 1152–1205; these read QQSQ…TGAL and SHVS…CALL. Basic and acidic residues-rich tracts occupy residues 1098-1109 and 1152-1162; these read GSEDSHTPEHQR and SHVSEDMDDKS. Low complexity predominate over residues 1171-1191; the sequence is ASGSMGRMSASSSTSSAGGQM. Positions 1195 to 1205 are enriched in basic residues; it reads SKKRSKLCALL. Cysteine 1202 carries the cysteine methyl ester modification. Cysteine 1202 carries S-farnesyl cysteine lipidation. A propeptide spans 1203–1205 (removed in mature form); the sequence is ALL.

The protein belongs to the cyclic nucleotide phosphodiesterase family. As to quaternary structure, interacts with PrBP. It depends on a divalent metal cation as a cofactor.

It localises to the cell membrane. The enzyme catalyses 3',5'-cyclic GMP + H2O = GMP + H(+). Has a role regulating cGMP transport in Malpighian tubule principal cells. The sequence is that of cGMP-specific 3',5'-cyclic phosphodiesterase from Drosophila sechellia (Fruit fly).